Here is an 871-residue protein sequence, read N- to C-terminus: Phosphoinositide 3-kinase regulatory subunit 5 (871 aa).

Methionine 1 carries the N-acetylmethionine modification. Positions 25-101 (SLGRRSAPWS…TPHFPPDSDL (77 aa)) are heterodimerization. The disordered stretch occupies residues 381-413 (MDSGYVEDSEENSEWPQKPGSQKRQGHRRPGQK). Phosphoserine occurs at positions 451 and 500. The interaction with beta-gamma G protein dimers stretch occupies residues 646–746 (PILADMLLYY…WSNLEKVCTS (101 aa)).

As to quaternary structure, heterodimer of a catalytic subunit (PIK3CG/p120) and a regulatory (PIK3R5a/p101) subunit. Interacts with beta-gamma G protein dimers.

The protein resides in the nucleus. It is found in the cytoplasm. Its subcellular location is the cell membrane. With respect to regulation, greatly activated by G gamma proteins. Regulatory subunit of the PI3K gamma complex. Required for recruitment of the catalytic subunit to the plasma membrane via interaction with beta-gamma G protein dimers. Required for G protein-mediated activation of PIK3CG. This chain is Phosphoinositide 3-kinase regulatory subunit 5 (Pik3r5), found in Mus musculus (Mouse).